A 422-amino-acid chain; its full sequence is Ribosomal RNA small subunit methyltransferase B (422 aa).

Residues 254-260 (CAAPGGK), Asp277, Asp303, and Asp322 each bind S-adenosyl-L-methionine. Catalysis depends on Cys375, which acts as the Nucleophile.

The protein belongs to the class I-like SAM-binding methyltransferase superfamily. RsmB/NOP family.

It localises to the cytoplasm. It catalyses the reaction cytidine(967) in 16S rRNA + S-adenosyl-L-methionine = 5-methylcytidine(967) in 16S rRNA + S-adenosyl-L-homocysteine + H(+). Specifically methylates the cytosine at position 967 (m5C967) of 16S rRNA. This is Ribosomal RNA small subunit methyltransferase B from Proteus mirabilis (strain HI4320).